The chain runs to 276 residues: NH(3)-dependent NAD(+) synthetase (276 aa).

Residue 43–50 coordinates ATP; the sequence is GISGGVDS. Aspartate 49 lines the Mg(2+) pocket. Arginine 146 contacts deamido-NAD(+). ATP is bound at residue threonine 166. Glutamate 171 is a binding site for Mg(2+). Deamido-NAD(+) contacts are provided by lysine 179 and aspartate 186. The ATP site is built by lysine 195 and threonine 217. Residue 266 to 267 participates in deamido-NAD(+) binding; it reads HK.

Belongs to the NAD synthetase family. In terms of assembly, homodimer.

It carries out the reaction deamido-NAD(+) + NH4(+) + ATP = AMP + diphosphate + NAD(+) + H(+). It functions in the pathway cofactor biosynthesis; NAD(+) biosynthesis; NAD(+) from deamido-NAD(+) (ammonia route): step 1/1. Functionally, catalyzes the ATP-dependent amidation of deamido-NAD to form NAD. Uses ammonia as a nitrogen source. This is NH(3)-dependent NAD(+) synthetase from Aliivibrio fischeri (strain MJ11) (Vibrio fischeri).